Here is a 534-residue protein sequence, read N- to C-terminus: uncharacterized protein (534 aa).

3 disordered regions span residues M1–P150, R252–P284, and W383–P434. Residues S8–W67 show a composition bias toward basic and acidic residues. A compositionally biased stretch (polar residues) spans S102–T113. Residues P130–S141 show a composition bias toward pro residues. A compositionally biased stretch (basic and acidic residues) spans R252–R262. Low complexity predominate over residues N263–S272. Residues N393–F408 are compositionally biased toward polar residues.

This is an uncharacterized protein from Schizosaccharomyces pombe (strain 972 / ATCC 24843) (Fission yeast).